The chain runs to 471 residues: 3-hydroxylaminophenol mutase (471 aa).

Residues 15 to 100 (NDVKFVDFRF…TCDVVEPSDG (86 aa)) enclose the GS beta-grasp domain. In terms of domain architecture, GS catalytic spans 107–471 (PRSIAKRAEA…PVEFEMYYSL (365 aa)).

This sequence belongs to the glutamine synthetase family.

The enzyme catalyses 3-hydroxyaminophenol = aminohydroquinone. With respect to regulation, is inhibited by H(2)O(2). 1,10-phenanthroline inhibits the activity slightly, but other metal cation chelators such as EDTA or tiron have no effect on the activity. Divalent metal cations and hydroxylamine have also no effect on the activity. Due to the relationship of the protein with glutamine synthetases, glutamate and glutamine were tested as inhibitors; neither preincubation of the compounds with the enzyme nor their addition to the assay buffer affected 3HAP mutase activity. Catalyzes the isomerization of 3-hydroxylaminophenol (3HAP) to aminohydroquinone, a step in the degradative pathway of 3-nitrophenol. The enzymatic reaction is regiospecific since it leads to the formation of aminohydroquinone exclusively, without producing the isomeric 4-aminocatechol. Can also isomerize other hydroxylaminoaromatic compounds, such as hydroxylaminobenzene to a mixture of 2-aminophenol and 4-aminophenol, 4-hydroxylaminotoluene to 6-amino-m-cresol, and 2-chloro-5-hydroxylaminophenol to 2-amino-5-chlorohydroquinone. Does not act on 4-hydroxylaminobenzoate. This chain is 3-hydroxylaminophenol mutase, found in Cupriavidus pinatubonensis (strain JMP 134 / LMG 1197) (Cupriavidus necator (strain JMP 134)).